The primary structure comprises 356 residues: Protein RecA (356 aa).

Residue 68–75 participates in ATP binding; that stretch reads GPESSGKT.

It belongs to the RecA family.

The protein localises to the cytoplasm. Can catalyze the hydrolysis of ATP in the presence of single-stranded DNA, the ATP-dependent uptake of single-stranded DNA by duplex DNA, and the ATP-dependent hybridization of homologous single-stranded DNAs. It interacts with LexA causing its activation and leading to its autocatalytic cleavage. The polypeptide is Protein RecA (Clostridium botulinum (strain Alaska E43 / Type E3)).